Here is a 179-residue protein sequence, read N- to C-terminus: UPF0398 protein SSU05_0416 (179 aa).

It belongs to the UPF0398 family.

In Streptococcus suis (strain 05ZYH33), this protein is UPF0398 protein SSU05_0416.